Reading from the N-terminus, the 426-residue chain is Glutamyl-tRNA reductase (426 aa).

Substrate contacts are provided by residues 52–55, serine 110, 115–117, and glutamine 121; these read TCNR and EYE. Catalysis depends on cysteine 53, which acts as the Nucleophile. Position 190–195 (190–195) interacts with NADP(+); it reads GAGEMA.

This sequence belongs to the glutamyl-tRNA reductase family. In terms of assembly, homodimer.

The enzyme catalyses (S)-4-amino-5-oxopentanoate + tRNA(Glu) + NADP(+) = L-glutamyl-tRNA(Glu) + NADPH + H(+). It participates in porphyrin-containing compound metabolism; protoporphyrin-IX biosynthesis; 5-aminolevulinate from L-glutamyl-tRNA(Glu): step 1/2. Functionally, catalyzes the NADPH-dependent reduction of glutamyl-tRNA(Glu) to glutamate 1-semialdehyde (GSA). The polypeptide is Glutamyl-tRNA reductase (Saccharolobus solfataricus (strain ATCC 35092 / DSM 1617 / JCM 11322 / P2) (Sulfolobus solfataricus)).